Here is a 104-residue protein sequence, read N- to C-terminus: Nucleoid-associated protein Ccon26_18480 (104 aa).

The span at 16 to 34 (DVQKQAKQMEEESKNKEFG) shows a compositional bias: basic and acidic residues. Residues 16-38 (DVQKQAKQMEEESKNKEFGAKSG) are disordered.

Belongs to the YbaB/EbfC family. As to quaternary structure, homodimer.

The protein resides in the cytoplasm. It localises to the nucleoid. Its function is as follows. Binds to DNA and alters its conformation. May be involved in regulation of gene expression, nucleoid organization and DNA protection. This Campylobacter concisus (strain 13826) protein is Nucleoid-associated protein Ccon26_18480.